The following is an 865-amino-acid chain: NBPF family member NBPF11 (865 aa).

Residues 70–130 adopt a coiled-coil conformation; that stretch reads MLRNERQFKE…RSLNEHLQAL (61 aa). The interval 161–200 is disordered; it reads KLSPENDEDEDEDVQVEEDEKVLESSAPREVQKAEESKVP. Positions 165-181 are enriched in acidic residues; the sequence is ENDEDEDEDVQVEEDEK. The region spanning 165-259 is the Olduvai 1 domain; it reads ENDEDEDEDV…GCQDALNILP (95 aa). A compositionally biased stretch (basic and acidic residues) spans 190-200; sequence EVQKAEESKVP. A coiled-coil region spans residues 339–401; it reads KSMLRNERQF…RSLNEHLQAL (63 aa). Olduvai domains are found at residues 436–528, 529–617, 620–675, 676–767, and 770–865; these read ENDN…HIIP, ENES…ATGP, SREL…VDMD, EIEK…PPCP, and SREL…SAAC. Disordered regions lie at residues 450–475 and 520–567; these read AEKVQKSSSPREMQKAEEKEVPEDSL and WEDA…GYST. 2 stretches are compositionally biased toward acidic residues: residues 530–539 and 550–562; these read NESDDEEEEE and ESEEEEVPQESWD. The tract at residues 829-865 is disordered; that stretch reads RGRGRKEGEEDQRRKEEGEEKKGKKIKTHHAPGSAAC. Residues 833-850 are compositionally biased toward basic and acidic residues; sequence RKEGEEDQRRKEEGEEKK.

It belongs to the NBPF family. As to expression, expressed in spinal cord.

It localises to the cytoplasm. The polypeptide is NBPF family member NBPF11 (Homo sapiens (Human)).